Reading from the N-terminus, the 305-residue chain is Sulfate adenylyltransferase subunit 2 1 (305 aa).

Positions 283-305 (RSGRAIDHDQAGSMERKKREGYF) are disordered.

This sequence belongs to the PAPS reductase family. CysD subfamily. In terms of assembly, heterodimer composed of CysD, the smaller subunit, and CysN.

It carries out the reaction sulfate + ATP + H(+) = adenosine 5'-phosphosulfate + diphosphate. It participates in sulfur metabolism; hydrogen sulfide biosynthesis; sulfite from sulfate: step 1/3. With CysN forms the ATP sulfurylase (ATPS) that catalyzes the adenylation of sulfate producing adenosine 5'-phosphosulfate (APS) and diphosphate, the first enzymatic step in sulfur assimilation pathway. APS synthesis involves the formation of a high-energy phosphoric-sulfuric acid anhydride bond driven by GTP hydrolysis by CysN coupled to ATP hydrolysis by CysD. In Chromohalobacter salexigens (strain ATCC BAA-138 / DSM 3043 / CIP 106854 / NCIMB 13768 / 1H11), this protein is Sulfate adenylyltransferase subunit 2 1.